The chain runs to 954 residues: Leucine--tRNA ligase (954 aa).

The short motif at 40–51 (PYPSGAGLHVGH) is the 'HIGH' region element. A 'KMSKS' region motif is present at residues 729–733 (KMSKS). Lysine 732 contributes to the ATP binding site.

It belongs to the class-I aminoacyl-tRNA synthetase family.

It is found in the cytoplasm. It catalyses the reaction tRNA(Leu) + L-leucine + ATP = L-leucyl-tRNA(Leu) + AMP + diphosphate. The polypeptide is Leucine--tRNA ligase (Flavobacterium johnsoniae (strain ATCC 17061 / DSM 2064 / JCM 8514 / BCRC 14874 / CCUG 350202 / NBRC 14942 / NCIMB 11054 / UW101) (Cytophaga johnsonae)).